Reading from the N-terminus, the 28-residue chain is 50 kDa venom protease (28 aa).

Belongs to the venom metalloproteinase (M12B) family. Requires Zn(2+) as cofactor. As to expression, expressed by the venom gland.

Its subcellular location is the secreted. This Proatheris superciliaris (Lowland swamp viper) protein is 50 kDa venom protease.